The following is a 424-amino-acid chain: Glutamyl-tRNA reductase (424 aa).

Residues 49 to 52, S105, 110 to 112, and Q116 contribute to the substrate site; these read TCNR and EPQ. The active-site Nucleophile is C50. 185–190 provides a ligand contact to NADP(+); the sequence is GSGETA.

The protein belongs to the glutamyl-tRNA reductase family. In terms of assembly, homodimer.

It carries out the reaction (S)-4-amino-5-oxopentanoate + tRNA(Glu) + NADP(+) = L-glutamyl-tRNA(Glu) + NADPH + H(+). It participates in porphyrin-containing compound metabolism; protoporphyrin-IX biosynthesis; 5-aminolevulinate from L-glutamyl-tRNA(Glu): step 1/2. Catalyzes the NADPH-dependent reduction of glutamyl-tRNA(Glu) to glutamate 1-semialdehyde (GSA). The polypeptide is Glutamyl-tRNA reductase (Legionella pneumophila (strain Lens)).